The sequence spans 377 residues: tRNA pseudouridine synthase Pus10 (377 aa).

D206 serves as the catalytic Nucleophile. The substrate site is built by Y270 and Y339.

The protein belongs to the pseudouridine synthase Pus10 family.

It carries out the reaction uridine(54) in tRNA = pseudouridine(54) in tRNA. The catalysed reaction is uridine(55) in tRNA = pseudouridine(55) in tRNA. Its function is as follows. Responsible for synthesis of pseudouridine from uracil-54 and uracil-55 in the psi GC loop of transfer RNAs. This chain is tRNA pseudouridine synthase Pus10, found in Picrophilus torridus (strain ATCC 700027 / DSM 9790 / JCM 10055 / NBRC 100828 / KAW 2/3).